Reading from the N-terminus, the 688-residue chain is Glycine--tRNA ligase beta subunit (688 aa).

Belongs to the class-II aminoacyl-tRNA synthetase family. Tetramer of two alpha and two beta subunits.

The protein localises to the cytoplasm. The catalysed reaction is tRNA(Gly) + glycine + ATP = glycyl-tRNA(Gly) + AMP + diphosphate. This Shewanella sp. (strain MR-7) protein is Glycine--tRNA ligase beta subunit.